A 549-amino-acid chain; its full sequence is Oxygen-dependent choline dehydrogenase (549 aa).

4-33 contacts FAD; it reads DFVIIGSGSAGSAMAYRLSEDGRYSVIVIE. His465 (proton acceptor) is an active-site residue.

Belongs to the GMC oxidoreductase family. It depends on FAD as a cofactor.

The enzyme catalyses choline + A = betaine aldehyde + AH2. The catalysed reaction is betaine aldehyde + NAD(+) + H2O = glycine betaine + NADH + 2 H(+). It functions in the pathway amine and polyamine biosynthesis; betaine biosynthesis via choline pathway; betaine aldehyde from choline (cytochrome c reductase route): step 1/1. Its function is as follows. Involved in the biosynthesis of the osmoprotectant glycine betaine. Catalyzes the oxidation of choline to betaine aldehyde and betaine aldehyde to glycine betaine at the same rate. This is Oxygen-dependent choline dehydrogenase from Brucella canis (strain ATCC 23365 / NCTC 10854 / RM-666).